The following is an 88-amino-acid chain: Conotoxin Ca8.3 (88 aa).

The signal sequence occupies residues 1–21 (MMLKMGAMFVLLLLFILPSSQ). Positions 22–46 (QEGDVQARKTHLKSGFYGTLAMSTR) are excised as a propeptide.

It belongs to the conotoxin S superfamily. Post-translationally, contains 5 disulfide bonds. Expressed by the venom duct.

The protein localises to the secreted. This Conus caracteristicus (Characteristic cone) protein is Conotoxin Ca8.3.